Reading from the N-terminus, the 177-residue chain is ATP synthase subunit delta (177 aa).

The protein belongs to the ATPase delta chain family. In terms of assembly, F-type ATPases have 2 components, F(1) - the catalytic core - and F(0) - the membrane proton channel. F(1) has five subunits: alpha(3), beta(3), gamma(1), delta(1), epsilon(1). F(0) has three main subunits: a(1), b(2) and c(10-14). The alpha and beta chains form an alternating ring which encloses part of the gamma chain. F(1) is attached to F(0) by a central stalk formed by the gamma and epsilon chains, while a peripheral stalk is formed by the delta and b chains.

It is found in the cell inner membrane. In terms of biological role, f(1)F(0) ATP synthase produces ATP from ADP in the presence of a proton or sodium gradient. F-type ATPases consist of two structural domains, F(1) containing the extramembraneous catalytic core and F(0) containing the membrane proton channel, linked together by a central stalk and a peripheral stalk. During catalysis, ATP synthesis in the catalytic domain of F(1) is coupled via a rotary mechanism of the central stalk subunits to proton translocation. Its function is as follows. This protein is part of the stalk that links CF(0) to CF(1). It either transmits conformational changes from CF(0) to CF(1) or is implicated in proton conduction. This chain is ATP synthase subunit delta, found in Azobacteroides pseudotrichonymphae genomovar. CFP2.